The following is a 1439-amino-acid chain: MTLPHSPGSAGEPQASQTVQVHRLEHRQEEEQKEERQHSLQMGSSVQRRTYRSSEEEQQFSSEDYALAAALALTASSELSWEAKLRRQTTTVELEERGQRRVGFGNDLERMELAFLRTQRLLRQRRDWKALRQRTEEKVREAKELIELCSGRGPWFWIPLRSHAVWEHTTVLLTCTVQGSPPFQVTWYKNDIRIDPRLFPAGKYRITNNYGLLTLEIMRCTVEDSATYTVLVKNAYGQASSFAKVLIRNYLGKDAGFDSEIFKRSMFGPSAEFTSVLKPIFAQEKEPFSLTCLFSDDVLEAEQRIQWYRDGRLLRSSTRRQILYADRQASVKVSCAYKEDEGFYTIRVSSPFGPQEQSAYVFIRDAAAEKPGAPGSPLNVRCLNVHRDCLTLTWVPPSDTRGSTITGYSIEMCQGDSEEWMPCLKAPGGTCRCPIQGLVEGQSYQFRVRAISKAGTSLPSKASEAVVTGDYDAVHKSTEIPYDLGSKITISKNDFEDAVTIPSAPTNVHASEIREAYAVLSWEEPRPRGRAPLTYTLEKSVIGSGTWEAISTETPIKSPRFALLDLEKGKSYVFRVRALNQYGMSDPSEPSEPVALKGKPATLPPPAQVQAFRNTQTSVSLAWEPVDGGSELLGYYIYSREAGASEWQTVNNKPIQDTKFTVPGLRTGKEYDFCIRSVSEAGVGESSAATQPVRVKQALATPSAPYDFALLNCGKNEMVIGWKPPKRRGGGKILGYFMDQHDSVESDWHPVNRQPIPSRVCKVTNLHEGHFYEFRARAVNWAGIGELSAPSSLFECKEWTMPEPGPPYDVRVSEVQATSVMLQWEPPLYIGAGPVTGYHVSFQEKGSEEWKPVTPDATSDTHLRVSDLQPGKQYMFRVQAMNSAGLGQPSVPTDPVLLEDKPDAQEIEVGVDDEGQIYLAFEAPEAPDFPEFQWSKDYQGPPDPQRVEVEDEISKSKVILKEPDLQDLGIYSVVVPDADEDTSASHTLTEEELNKLKKLSHEIRNPVIKLISGWNVEILEQGEVRLWLEVEKLSPAAELHLIFNEKEIFSSPNRKINFDREKGLVEVIIQQLSEDDKGSYTAQLQDGKAKNQITLALVDDEFDKLLRKADAKRRDWKRKQGPYFQEPLTWKVTDDCQVLLSCKVTNTKKESRFQWFFQKKEAPHGQYNPPTGDGSLSIEGFSKENQGVYRAVVSDERGEDDTVLDLTGEALDAVLTELGRIGALSATPLKIQGTEEGIRLFSKVKYYNVDYMKTAWFHKDKRLESGDRVRAGTTLDEIWLHILDPKDSDKGKYTLEITAGKEVRQLSADLSGQAFDDALAEHQRLKALAVIEKNRAKVVRGLPDVATIMEDKTLCLTCVISGDPSPEISWLKNDQPISFFDRYHMEVKGTEVTVTIDKVTSEDSGRYGIFVKNKYGSETGQVTISVFKHGEEPKELKKK.

A disordered region spans residues 1–57 (MTLPHSPGSAGEPQASQTVQVHRLEHRQEEEQKEERQHSLQMGSSVQRRTYRSSEEE). Residues 22–38 (HRLEHRQEEEQKEERQH) are compositionally biased toward basic and acidic residues. Positions 39 to 48 (SLQMGSSVQR) are enriched in polar residues. Positions 119-149 (QRLLRQRRDWKALRQRTEEKVREAKELIELC) form a coiled coil. 2 Ig-like C2-type domains span residues 154–246 (PWFW…AKVL) and 269–362 (PSAE…AYVF). 5 consecutive Fibronectin type-III domains span residues 376-471 (SPLN…TGDY), 504-599 (APTN…LKGK), 605-698 (PPAQ…VKQA), 704-799 (APYD…CKEW), and 806-901 (PPYD…LEDK). 2 Ig-like C2-type domains span residues 1122-1207 (PYFQ…LDLT) and 1336-1425 (AKVV…VTIS).

As to quaternary structure, homodimer. In terms of tissue distribution, mainly expressed in slow muscle, extraocular muscle and embryonic/neonatal skeletal muscle (at protein level). Expression in skeletal muscle is fiber type specific, with the highest levels in type IIA fibers (intermediate speed) and lower levels in type I fibers.

The protein localises to the cytoplasm. It is found in the myofibril. Its subcellular location is the sarcomere. It localises to the m line. May link the intermediate filament cytoskeleton to the M-disk of the myofibrils in striated muscle. The polypeptide is Myomesin-3 (Myom3) (Mus musculus (Mouse)).